A 146-amino-acid chain; its full sequence is Negative cofactor 2 complex subunit beta (146 aa).

The interval 124–146 (FRQSRSRLHHNSVSDPVKSEDSS) is disordered. Residues Ser-135, Ser-137, and Ser-142 each carry the phosphoserine modification.

Component of the NC2 (negative cofactor 2) complex composed of BUR6 and NCB2. The NC2 complex associates with SPT15/TBP. Interacts with SPT15/TBP.

It is found in the nucleus. In terms of biological role, component of the NC2 complex which represses RNA polymerase II transcription through binding to SPT15/TBP and thereby inhibiting the assembly of the preinitiation complex. The NC2 complex may also mediate transcriptional activation from TATA-driven promoters through association with SPT15/TBP. In Saccharomyces cerevisiae (strain ATCC 204508 / S288c) (Baker's yeast), this protein is Negative cofactor 2 complex subunit beta (NCB2).